A 406-amino-acid chain; its full sequence is Glutamyl-tRNA reductase (406 aa).

Substrate is bound by residues 51 to 54 (TCNR), Ser101, 106 to 108 (ESE), and Gln112. Cys52 acts as the Nucleophile in catalysis. 180-185 (GAGSIG) provides a ligand contact to NADP(+).

This sequence belongs to the glutamyl-tRNA reductase family. Homodimer.

The enzyme catalyses (S)-4-amino-5-oxopentanoate + tRNA(Glu) + NADP(+) = L-glutamyl-tRNA(Glu) + NADPH + H(+). It functions in the pathway porphyrin-containing compound metabolism; protoporphyrin-IX biosynthesis; 5-aminolevulinate from L-glutamyl-tRNA(Glu): step 1/2. In terms of biological role, catalyzes the NADPH-dependent reduction of glutamyl-tRNA(Glu) to glutamate 1-semialdehyde (GSA). In Caldivirga maquilingensis (strain ATCC 700844 / DSM 13496 / JCM 10307 / IC-167), this protein is Glutamyl-tRNA reductase.